A 245-amino-acid chain; its full sequence is Cytochrome P450 CYP82H23 (245 aa).

The protein belongs to the cytochrome P450 family. Heme is required as a cofactor.

Probable heme-thiolate monooxygenase. The sequence is that of Cytochrome P450 CYP82H23 from Panax ginseng (Korean ginseng).